The sequence spans 220 residues: Cysteine-rich venom protein VAR5 (220 aa).

Positions 1 to 22 (MILLKLYLTLAAILCQSRGTTS) are cleaved as a signal peptide. The region spanning 41 to 169 (NKHNDLRRTV…PLKYFLVCQY (129 aa)) is the SCP domain. 5 cysteine pairs are disulfide-bonded: C77-C156, C95-C170, C151-C167, C189-C196, and C192-C201. In terms of domain architecture, ShKT spans 205 to 220 (CEHSNQYINCPDLTKQ).

Belongs to the CRISP family. Contains 8 disulfide bonds. In terms of tissue distribution, expressed by the venom gland.

Its subcellular location is the secreted. Its function is as follows. Blocks ryanodine receptors, and potassium channels. This Varanus acanthurus (Ridge-tailed monitor) protein is Cysteine-rich venom protein VAR5.